The chain runs to 101 residues: Gamma-secretase subunit PEN-2 (101 aa).

Topologically, residues 1 to 17 are cytoplasmic; the sequence is MNLERVSNEEKLNLCRK. Residues 18-36 constitute an intramembrane region (helical); sequence YYLGGFAFLPFLWLVNIFW. Residues 37 to 57 are Cytoplasmic-facing; the sequence is FFREAFIVPAYTEQSQIKGYV. The helical transmembrane segment at 58–78 threads the bilayer; it reads WRSAVGFFLWVIVLSTWITIF. Residues 79-101 lie on the Lumenal side of the membrane; that stretch reads QIYRPRWGALGDYLSFTIPLGTP.

This sequence belongs to the PEN-2 family. As to quaternary structure, the functional gamma-secretase complex is composed of at least four polypeptides: a presenilin homodimer (PSEN1 or PSEN2), nicastrin (NCSTN), APH1 (APH1A or APH1B) and PSENEN.

The protein localises to the endoplasmic reticulum membrane. It localises to the golgi apparatus. It is found in the golgi stack membrane. The protein resides in the cell membrane. Its subcellular location is the membrane. Its function is as follows. Essential subunit of the gamma-secretase complex, an endoprotease complex that catalyzes the intramembrane cleavage of integral membrane proteins such as Notch receptors and APP (amyloid-beta precursor protein). The gamma-secretase complex plays a role in Notch and Wnt signaling cascades and regulation of downstream processes via its role in processing key regulatory proteins, and by regulating cytosolic CTNNB1 levels. PSENEN modulates both endoproteolysis of presenilin and gamma-secretase activity. The protein is Gamma-secretase subunit PEN-2 (PSENEN) of Bos taurus (Bovine).